A 494-amino-acid polypeptide reads, in one-letter code: Histidine--tRNA ligase (494 aa).

The tract at residues 1 to 20 (MAKDQKKQPRPKAETPKGFR) is disordered.

This sequence belongs to the class-II aminoacyl-tRNA synthetase family. As to quaternary structure, homodimer.

The protein localises to the cytoplasm. The catalysed reaction is tRNA(His) + L-histidine + ATP = L-histidyl-tRNA(His) + AMP + diphosphate + H(+). This is Histidine--tRNA ligase from Paracoccus denitrificans (strain Pd 1222).